Reading from the N-terminus, the 457-residue chain is Cysteine--tRNA ligase (457 aa).

Zn(2+) is bound at residue Cys31. The 'HIGH' region signature appears at 33 to 43 (PTVYNYAHIGN). Positions 211, 236, and 240 each coordinate Zn(2+). The short motif at 269 to 273 (KMSKS) is the 'KMSKS' region element. Residue Lys272 participates in ATP binding.

This sequence belongs to the class-I aminoacyl-tRNA synthetase family. Monomer. Zn(2+) is required as a cofactor.

Its subcellular location is the cytoplasm. The enzyme catalyses tRNA(Cys) + L-cysteine + ATP = L-cysteinyl-tRNA(Cys) + AMP + diphosphate. The chain is Cysteine--tRNA ligase from Xanthomonas campestris pv. campestris (strain ATCC 33913 / DSM 3586 / NCPPB 528 / LMG 568 / P 25).